Reading from the N-terminus, the 122-residue chain is Small ribosomal subunit protein uS13 (122 aa).

Residues 95–116 (GLPCRGQKTKTNARTRKGKKKT) are compositionally biased toward basic residues. Residues 95 to 122 (GLPCRGQKTKTNARTRKGKKKTVGAATK) form a disordered region.

The protein belongs to the universal ribosomal protein uS13 family. Part of the 30S ribosomal subunit. Forms a loose heterodimer with protein S19. Forms two bridges to the 50S subunit in the 70S ribosome.

Its function is as follows. Located at the top of the head of the 30S subunit, it contacts several helices of the 16S rRNA. In the 70S ribosome it contacts the 23S rRNA (bridge B1a) and protein L5 of the 50S subunit (bridge B1b), connecting the 2 subunits; these bridges are implicated in subunit movement. Contacts the tRNAs in the A and P-sites. The sequence is that of Small ribosomal subunit protein uS13 from Aliarcobacter butzleri (strain RM4018) (Arcobacter butzleri).